We begin with the raw amino-acid sequence, 228 residues long: SKA complex subunit 2 (228 aa).

This sequence belongs to the SKA2 family. Component of the SKA complex, composed of ska1, ska2 and ska3.

It localises to the cytoplasm. It is found in the cytoskeleton. The protein localises to the spindle. Its subcellular location is the chromosome. The protein resides in the centromere. It localises to the kinetochore. Its function is as follows. Component of the SKA complex, a microtubule plus end-binding complex of the outer kinetochore that stabilizes spindle microtubule-kinetochore attachments, promotes alignment of chromosomes at the mitotic spindle equator (chromosome congression) and assists suppression of the spindle assembly checkpoint. Kinetochores, consisting of a centromere-associated inner segment and a microtubule-contacting outer segment, play a crucial role in chromosome segregation by mediating the physical connection between centromeric DNA and spindle microtubules. The outer kinetochore is made up of the ten-subunit KMN network complex, comprising the MIS12, NDC80 and KNL1 complexes, and auxiliary microtubule-associated components such as the SKA complex; together they connect the outer kinetochore with the inner kinetochore, bind microtubules, and mediate interactions with mitotic checkpoint proteins that delay anaphase until chromosomes are bioriented on the spindle. The SKA complex is loaded onto bioriented kinetochores and it facilitates chromosome congression by stabilizing microtubules together with MAPRE1, and end-on attachment of the NDC80 complex to depolymerizing spindle microtubules, thereby assisting the poleward-moving kinetochore in withstanding microtubule pulling forces. The complex associates with dynamic microtubule plus-ends and can track both depolymerizing and elongating microtubules. The complex recruits protein phosphatase 1 (PP1) to the kinetochore in prometaphase and metaphase, to oppose spindle assembly checkpoint signaling and promote the onset of anaphase. Binds directly to microtubules; but with a much lower affinity than SKA1. During meiosis the SKA complex stabilizes the meiotic spindle and is required for its migration to the cortex. The sequence is that of SKA complex subunit 2 (ska2) from Salmo salar (Atlantic salmon).